Reading from the N-terminus, the 329-residue chain is Phospho-N-acetylmuramoyl-pentapeptide-transferase (329 aa).

The next 9 membrane-spanning stretches (helical) occupy residues 1 to 21, 53 to 73, 76 to 96, 109 to 129, 141 to 161, 175 to 195, 198 to 218, 237 to 257, and 309 to 329; these read MLLN…IGIP, MGGF…ALVF, FSPA…IGFL, GLTA…SYFI, ILSW…IWLV, GLAS…AVVH, YDVL…FVFN, FLAI…IGAV, and IVFW…YFAF.

Belongs to the glycosyltransferase 4 family. MraY subfamily. Mg(2+) is required as a cofactor.

It is found in the cell membrane. It catalyses the reaction UDP-N-acetyl-alpha-D-muramoyl-L-alanyl-gamma-D-glutamyl-L-lysyl-D-alanyl-D-alanine + di-trans,octa-cis-undecaprenyl phosphate = Mur2Ac(oyl-L-Ala-gamma-D-Glu-L-Lys-D-Ala-D-Ala)-di-trans,octa-cis-undecaprenyl diphosphate + UMP. The protein operates within cell wall biogenesis; peptidoglycan biosynthesis. Its function is as follows. Catalyzes the initial step of the lipid cycle reactions in the biosynthesis of the cell wall peptidoglycan: transfers peptidoglycan precursor phospho-MurNAc-pentapeptide from UDP-MurNAc-pentapeptide onto the lipid carrier undecaprenyl phosphate, yielding undecaprenyl-pyrophosphoryl-MurNAc-pentapeptide, known as lipid I. This Lactococcus lactis subsp. cremoris (strain SK11) protein is Phospho-N-acetylmuramoyl-pentapeptide-transferase.